Here is a 149-residue protein sequence, read N- to C-terminus: UPF0336 protein CMM_2793 (149 aa).

A MaoC-like domain is found at alanine 16–glycine 117.

The protein belongs to the UPF0336 family.

The polypeptide is UPF0336 protein CMM_2793 (Clavibacter michiganensis subsp. michiganensis (strain NCPPB 382)).